Consider the following 278-residue polypeptide: MANYTAADVKRLRELTGAGMMACKKALEESGGDFDKAIEALRIKGAKDVGKRAERTAANGLIALAQDGDTSAVLLELNCETDFVAKNDKFQELAAELAGFVARTSPSDVPSLLSADYADGKTVSQVIEELSAVIGEKIELRRFAKVEGAYVASYMHKSDPDLPPTLGVLVELDKPNAEVAKDLAQQIAALAPKYISRDDVPADVVENERRIAKATAREEGKPEQALPKIVEGRLNGFFKDATLLGQPFVKDNKKTIQQVVDEAGVTVRRFVRFKVGQA.

The tract at residues 81–84 is involved in Mg(2+) ion dislocation from EF-Tu; sequence TDFV.

Belongs to the EF-Ts family.

The protein resides in the cytoplasm. Its function is as follows. Associates with the EF-Tu.GDP complex and induces the exchange of GDP to GTP. It remains bound to the aminoacyl-tRNA.EF-Tu.GTP complex up to the GTP hydrolysis stage on the ribosome. The chain is Elongation factor Ts from Thermobifida fusca (strain YX).